A 351-amino-acid chain; its full sequence is Dihydroorotate dehydrogenase (quinone) (351 aa).

FMN is bound by residues 61–65 (AGLDK) and Thr85. Lys65 provides a ligand contact to substrate. Residue 110–114 (NRMGF) participates in substrate binding. FMN-binding residues include Asn139 and Asn172. Residue Asn172 participates in substrate binding. The active-site Nucleophile is the Ser175. Asn177 serves as a coordination point for substrate. Lys217 and Thr245 together coordinate FMN. 246–247 (NT) is a binding site for substrate. FMN is bound by residues Gly268, Gly297, and 318–319 (YT).

Belongs to the dihydroorotate dehydrogenase family. Type 2 subfamily. In terms of assembly, monomer. It depends on FMN as a cofactor.

The protein localises to the cell membrane. It catalyses the reaction (S)-dihydroorotate + a quinone = orotate + a quinol. Its pathway is pyrimidine metabolism; UMP biosynthesis via de novo pathway; orotate from (S)-dihydroorotate (quinone route): step 1/1. Its function is as follows. Catalyzes the conversion of dihydroorotate to orotate with quinone as electron acceptor. This Xylella fastidiosa (strain 9a5c) protein is Dihydroorotate dehydrogenase (quinone).